The chain runs to 554 residues: (S)-1-hydroxy-N-methylcanadine 13-hydroxylase CYP82X2 (554 aa).

A helical transmembrane segment spans residues 23 to 43 (IISTFIVTIISIVFLYTVLLI). Cysteine 494 is a binding site for heme.

The protein belongs to the cytochrome P450 family. Heme is required as a cofactor. As to expression, highly expressed in capsules. Expressed is stems.

It localises to the membrane. The enzyme catalyses (S)-1-hydroxy-N-methylcanadine + reduced [NADPH--hemoprotein reductase] + O2 = (13S,14R)-1,13-dihydroxy-N-methylcanadine + oxidized [NADPH--hemoprotein reductase] + H2O + H(+). Its pathway is alkaloid biosynthesis. Its function is as follows. Cytochrome P450 involved in the biosynthesis of the benzylisoquinoline alkaloid noscapine. Converts (S)-1-hydroxy-N-methylcanadine to (13S,14R)-1,13-dihydroxy-N-methylcanadine. The protein is (S)-1-hydroxy-N-methylcanadine 13-hydroxylase CYP82X2 of Papaver somniferum (Opium poppy).